Consider the following 316-residue polypeptide: Pantothenate kinase (316 aa).

Position 95–102 (95–102 (GSVAVGKS)) interacts with ATP.

The protein belongs to the prokaryotic pantothenate kinase family.

The protein resides in the cytoplasm. The catalysed reaction is (R)-pantothenate + ATP = (R)-4'-phosphopantothenate + ADP + H(+). The protein operates within cofactor biosynthesis; coenzyme A biosynthesis; CoA from (R)-pantothenate: step 1/5. This chain is Pantothenate kinase, found in Shewanella baltica (strain OS195).